Consider the following 100-residue polypeptide: Competence protein ComGE (100 aa).

The helical transmembrane segment at 15-35 (VILLEAVVALAIFASIATLLL) threads the bilayer.

The transformation pili are flexible filaments, consisting mainly of the major pilin ComGC and smaller amounts of the minor pilins, including at least ComGD, ComGF and ComGG, and perhaps ComGE. Interacts with ComGD. Interacts with ComGF. Interacts with ComGG.

The protein resides in the cell membrane. The protein localises to the cell surface. Its function is as follows. Required for formation of the type IV-like pilus (T4P) that plays a role in transformation. Transformation pili are dynamically extended and retracted, perhaps thereby promoting DNA uptake and transformation. Involved in transformation. Required for DNA binding. In Streptococcus pneumoniae (strain ATCC BAA-255 / R6), this protein is Competence protein ComGE.